Here is a 396-residue protein sequence, read N- to C-terminus: Elongation factor Tu (396 aa).

The 197-residue stretch at 10–206 (KPHVNVGTIG…ALDSYIPEPT (197 aa)) folds into the tr-type G domain. Residues 19 to 26 (GHVDHGKT) are G1. 19-26 (GHVDHGKT) provides a ligand contact to GTP. Residue T26 participates in Mg(2+) binding. The segment at 60 to 64 (GITIS) is G2. Residues 81–84 (DCPG) are G3. Residues 81-85 (DCPGH) and 136-139 (NKAD) each bind GTP. Positions 136–139 (NKAD) are G4. Residues 174 to 176 (SAL) form a G5 region.

The protein belongs to the TRAFAC class translation factor GTPase superfamily. Classic translation factor GTPase family. EF-Tu/EF-1A subfamily. Monomer.

It localises to the cytoplasm. It carries out the reaction GTP + H2O = GDP + phosphate + H(+). Functionally, GTP hydrolase that promotes the GTP-dependent binding of aminoacyl-tRNA to the A-site of ribosomes during protein biosynthesis. The sequence is that of Elongation factor Tu from Hydrogenovibrio crunogenus (strain DSM 25203 / XCL-2) (Thiomicrospira crunogena).